Here is a 113-residue protein sequence, read N- to C-terminus: Na(+)/H(+) antiporter subunit C1 (113 aa).

The next 3 helical transmembrane spans lie at 1–21 (MEII…YLVL), 28–48 (IVMG…TMGG), and 72–92 (LILT…VLAF).

It belongs to the CPA3 antiporters (TC 2.A.63) subunit C family. In terms of assembly, may form a heterooligomeric complex that consists of seven subunits: mnhA1, mnhB1, mnhC1, mnhD1, mnhE1, mnhF1 and mnhG1.

Its subcellular location is the cell membrane. Mnh complex is a Na(+)/H(+) antiporter involved in Na(+) excretion. The chain is Na(+)/H(+) antiporter subunit C1 (mnhC1) from Staphylococcus aureus (strain JH1).